The following is a 423-amino-acid chain: UDP-N-acetylglucosamine 1-carboxyvinyltransferase (423 aa).

Position 22-23 (22-23 (KN)) interacts with phosphoenolpyruvate. UDP-N-acetyl-alpha-D-glucosamine is bound at residue Arg-93. The Proton donor role is filled by Cys-117. Cys-117 is modified (2-(S-cysteinyl)pyruvic acid O-phosphothioketal). UDP-N-acetyl-alpha-D-glucosamine-binding positions include 122 to 126 (RPVDL), Asp-308, and Val-330.

This sequence belongs to the EPSP synthase family. MurA subfamily.

It localises to the cytoplasm. It catalyses the reaction phosphoenolpyruvate + UDP-N-acetyl-alpha-D-glucosamine = UDP-N-acetyl-3-O-(1-carboxyvinyl)-alpha-D-glucosamine + phosphate. It functions in the pathway cell wall biogenesis; peptidoglycan biosynthesis. Cell wall formation. Adds enolpyruvyl to UDP-N-acetylglucosamine. The sequence is that of UDP-N-acetylglucosamine 1-carboxyvinyltransferase from Finegoldia magna (strain ATCC 29328 / DSM 20472 / WAL 2508) (Peptostreptococcus magnus).